Here is a 42-residue protein sequence, read N- to C-terminus: Conodipine-M beta chain (42 aa).

As to quaternary structure, heterodimer of an alpha and a beta chains; probably disulfide-linked. Expressed by the venom duct.

It is found in the secreted. Heterodimer: conodipine-M catalyzes the calcium-dependent hydrolysis of the 2-acyl groups in 3-sn-phosphoglycerides. This activity may be supported by the alpha chain. Conodipine-M inhibits the binding of isradipine (a ligand specific for L-type calcium channel) to L-type calcium channels. In Conus magus (Magical cone), this protein is Conodipine-M beta chain.